An 80-amino-acid chain; its full sequence is Serine palmitoyltransferase-regulating protein TSC3 (80 aa).

A helical membrane pass occupies residues 54-74; it reads FDSFFLHVFFLTIFSLSFFGI.

As to quaternary structure, interacts with the serine palmitoyltransferase complex LCB1-LCB2. Component of the SPOTS complex, at least composed of LCB1/2 (LCB1 and/or LCB2), ORM1/2 (ORM1 and/or ORM2), SAC1 and TSC3.

The protein localises to the endoplasmic reticulum membrane. In terms of biological role, stimulates the activity of serine palmitoyltransferase (SPT), and thus plays a role in the biosynthesis of sphingolipids. The sequence is that of Serine palmitoyltransferase-regulating protein TSC3 (TSC3) from Saccharomyces cerevisiae (strain ATCC 204508 / S288c) (Baker's yeast).